A 123-amino-acid chain; its full sequence is Ribosome-binding factor A (123 aa).

The protein belongs to the RbfA family. As to quaternary structure, monomer. Binds 30S ribosomal subunits, but not 50S ribosomal subunits or 70S ribosomes.

Its subcellular location is the cytoplasm. Its function is as follows. One of several proteins that assist in the late maturation steps of the functional core of the 30S ribosomal subunit. Associates with free 30S ribosomal subunits (but not with 30S subunits that are part of 70S ribosomes or polysomes). Required for efficient processing of 16S rRNA. May interact with the 5'-terminal helix region of 16S rRNA. The polypeptide is Ribosome-binding factor A (Acetivibrio thermocellus (strain ATCC 27405 / DSM 1237 / JCM 9322 / NBRC 103400 / NCIMB 10682 / NRRL B-4536 / VPI 7372) (Clostridium thermocellum)).